A 365-amino-acid polypeptide reads, in one-letter code: Alanine racemase (365 aa).

Lys-36 (proton acceptor; specific for D-alanine) is an active-site residue. Lys-36 is modified (N6-(pyridoxal phosphate)lysine). Arg-132 contributes to the substrate binding site. The active-site Proton acceptor; specific for L-alanine is Tyr-257. Position 305 (Met-305) interacts with substrate.

The protein belongs to the alanine racemase family. It depends on pyridoxal 5'-phosphate as a cofactor.

The enzyme catalyses L-alanine = D-alanine. Its pathway is amino-acid biosynthesis; D-alanine biosynthesis; D-alanine from L-alanine: step 1/1. Functionally, catalyzes the interconversion of L-alanine and D-alanine. May also act on other amino acids. The protein is Alanine racemase (alr) of Xylella fastidiosa (strain Temecula1 / ATCC 700964).